The chain runs to 396 residues: MAKGKFERTKPHVNVGTIGHVDHGKTTLTAAITTVLSTKFGGEARGYDQIDAAPEEKARGITINTAHVEYETESRHYAHVDCPGHADYVKNMITGAAQMDGAILVVSAADGPMPQTREHILLSRQVGVPYIIVFLNKADMVDDAELLELVEMEVRELLSKYDFPGDDTPIVKGSAKLALEGDKGELGEQAILSLAAALDTYIPTPERAVDGSFLMPVEDVFSISGRGTVVTGRIERGVVKVGEEIEIVGIKPTVKTTCTGVEMFRKLLDQGQAGDNVGILLRGTKREDVERGQVLAKPGSINPHTDFTAEVYILSKEEGGRHTPFFNGYRPQFYFRTTDVTGTIDLPQDKEMVLPGDNVTMTVKLLAPIAMEEGLRFAIREGGRTVGAGVVAKILK.

In terms of domain architecture, tr-type G spans 10-206; that stretch reads KPHVNVGTIG…ALDTYIPTPE (197 aa). The tract at residues 19 to 26 is G1; sequence GHVDHGKT. 19–26 contributes to the GTP binding site; it reads GHVDHGKT. Threonine 26 contributes to the Mg(2+) binding site. Residues 60–64 are G2; that stretch reads GITIN. Residues 81 to 84 are G3; the sequence is DCPG. Residues 81 to 85 and 136 to 139 each bind GTP; these read DCPGH and NKAD. The interval 136 to 139 is G4; it reads NKAD. A G5 region spans residues 174 to 176; sequence SAK.

The protein belongs to the TRAFAC class translation factor GTPase superfamily. Classic translation factor GTPase family. EF-Tu/EF-1A subfamily. In terms of assembly, monomer.

The protein localises to the cytoplasm. The catalysed reaction is GTP + H2O = GDP + phosphate + H(+). Its function is as follows. GTP hydrolase that promotes the GTP-dependent binding of aminoacyl-tRNA to the A-site of ribosomes during protein biosynthesis. This Bordetella avium (strain 197N) protein is Elongation factor Tu.